A 199-amino-acid polypeptide reads, in one-letter code: FMN-dependent NADH:quinone oxidoreductase 2 (199 aa).

Residues Ser10, 16–18, and 96–99 contribute to the FMN site; these read SVS and MYNF.

The protein belongs to the azoreductase type 1 family. In terms of assembly, homodimer. Requires FMN as cofactor.

It catalyses the reaction 2 a quinone + NADH + H(+) = 2 a 1,4-benzosemiquinone + NAD(+). It carries out the reaction N,N-dimethyl-1,4-phenylenediamine + anthranilate + 2 NAD(+) = 2-(4-dimethylaminophenyl)diazenylbenzoate + 2 NADH + 2 H(+). Its function is as follows. Quinone reductase that provides resistance to thiol-specific stress caused by electrophilic quinones. In terms of biological role, also exhibits azoreductase activity. Catalyzes the reductive cleavage of the azo bond in aromatic azo compounds to the corresponding amines. This is FMN-dependent NADH:quinone oxidoreductase 2 from Pseudomonas fluorescens (strain Pf0-1).